Here is a 306-residue protein sequence, read N- to C-terminus: Stimulator of interferon genes protein 5 (306 aa).

The disordered stretch occupies residues 1 to 50 (MMSNDSQSEKRTAKWTGSGTPIAEGEESSSPSAHQTRQKATAADDDDDQQ). Residues Y119, R180, and R186 each coordinate 2',3'-cGAMP.

The protein belongs to the STING family.

Its function is as follows. Facilitator of innate immune signaling that acts as a sensor of second messenger signals produced by cyclic GMP-AMP synthase-like receptors (cGLRs) and promotes the production of type I interferon. Innate immune response is triggered in response to nucleotides from viruses and bacteria delivered to the cytoplasm. Acts by binding cyclic dinucleotides: recognizes and binds 2'-3' linked cGAMP (2'-3'-cGAMP), a second messengers produced by cGLRs in response to nucleotides in the cytosol, such as double-stranded RNA (dsRNA). Upon binding to 2'-3'-cGAMP, oligomerizes and promotes the recruitment and subsequent activation of the transcription factor IRF3 to induce expression of type I interferon. The sequence is that of Stimulator of interferon genes protein 5 from Stylophora pistillata (Smooth cauliflower coral).